Reading from the N-terminus, the 295-residue chain is Bifunctional protein FolD (295 aa).

Residues Gly-166–Ser-168, Ser-195, and Ile-236 each bind NADP(+).

This sequence belongs to the tetrahydrofolate dehydrogenase/cyclohydrolase family. As to quaternary structure, homodimer.

It carries out the reaction (6R)-5,10-methylene-5,6,7,8-tetrahydrofolate + NADP(+) = (6R)-5,10-methenyltetrahydrofolate + NADPH. It catalyses the reaction (6R)-5,10-methenyltetrahydrofolate + H2O = (6R)-10-formyltetrahydrofolate + H(+). The protein operates within one-carbon metabolism; tetrahydrofolate interconversion. In terms of biological role, catalyzes the oxidation of 5,10-methylenetetrahydrofolate to 5,10-methenyltetrahydrofolate and then the hydrolysis of 5,10-methenyltetrahydrofolate to 10-formyltetrahydrofolate. In Pelodictyon phaeoclathratiforme (strain DSM 5477 / BU-1), this protein is Bifunctional protein FolD.